We begin with the raw amino-acid sequence, 76 residues long: Small ribosomal subunit protein bS16 (76 aa).

The protein belongs to the bacterial ribosomal protein bS16 family.

This Helicobacter acinonychis (strain Sheeba) protein is Small ribosomal subunit protein bS16.